The chain runs to 256 residues: Galactitol 2-dehydrogenase (256 aa).

Residues 15–17, Asp-36, 59–60, Asn-86, Tyr-152, and Lys-156 contribute to the NAD(+) site; these read RGI and DV. Catalysis depends on Tyr-152, which acts as the Proton acceptor.

This sequence belongs to the short-chain dehydrogenases/reductases (SDR) family.

The enzyme catalyses galactitol + NAD(+) = keto-D-tagatose + NADH + H(+). It catalyses the reaction keto-D-fructose + NADH + H(+) = D-sorbitol + NAD(+). It participates in carbohydrate metabolism. Involved in galactitol catabolism. Catalyzes the oxidation of galactitol to D-tagatose. Can also catalyze the oxidation of D-sorbitol to D-fructose. In Agrobacterium fabrum (strain C58 / ATCC 33970) (Agrobacterium tumefaciens (strain C58)), this protein is Galactitol 2-dehydrogenase.